Reading from the N-terminus, the 27-residue chain is Carcinustatin-20 (27 aa).

L27 is modified (leucine amide).

Belongs to the allatostatin family.

Its subcellular location is the secreted. In terms of biological role, may act as a neurotransmitter or neuromodulator. The chain is Carcinustatin-20 from Carcinus maenas (Common shore crab).